A 66-amino-acid chain; its full sequence is Large ribosomal subunit protein bL35 (66 aa).

This sequence belongs to the bacterial ribosomal protein bL35 family.

The sequence is that of Large ribosomal subunit protein bL35 from Bradyrhizobium diazoefficiens (strain JCM 10833 / BCRC 13528 / IAM 13628 / NBRC 14792 / USDA 110).